Here is a 463-residue protein sequence, read N- to C-terminus: Adenosylhomocysteinase (463 aa).

Thr54, Asp128, and Glu189 together coordinate substrate. 190–192 (TTT) is a binding site for NAD(+). Substrate contacts are provided by Lys219 and Asp223. Residues Asn224, 253–258 (GYGDVG), Glu276, Asn311, 332–334 (IGH), and Asn377 contribute to the NAD(+) site.

This sequence belongs to the adenosylhomocysteinase family. As to quaternary structure, homotetramer. The cofactor is NAD(+).

The protein localises to the cytoplasm. It carries out the reaction S-adenosyl-L-homocysteine + H2O = L-homocysteine + adenosine. Its pathway is amino-acid biosynthesis; L-homocysteine biosynthesis; L-homocysteine from S-adenosyl-L-homocysteine: step 1/1. Its function is as follows. May play a key role in the regulation of the intracellular concentration of adenosylhomocysteine. In Rhodobacter capsulatus (strain ATCC BAA-309 / NBRC 16581 / SB1003), this protein is Adenosylhomocysteinase.